We begin with the raw amino-acid sequence, 20 residues long: Protein C activator (20 aa).

Residues 1 to 20 (VVGGDECNINEHRSLALMYA) enclose the Peptidase S1 domain.

This sequence belongs to the peptidase S1 family. Snake venom subfamily. As to quaternary structure, monomer. Glycosylated. Expressed by the venom gland.

It localises to the secreted. Inhibited by calcium. Snake venom serine protease that selectively cleaves the heavy chain of protein C (PROC). This activation is thrombomodulin-independent. This is Protein C activator from Agkistrodon bilineatus (Cantil).